Consider the following 380-residue polypeptide: DNA replication and repair protein RecF (380 aa).

30–37 is a binding site for ATP; that stretch reads GQNGQGKT.

It belongs to the RecF family.

The protein resides in the cytoplasm. Its function is as follows. The RecF protein is involved in DNA metabolism; it is required for DNA replication and normal SOS inducibility. RecF binds preferentially to single-stranded, linear DNA. It also seems to bind ATP. This chain is DNA replication and repair protein RecF, found in Myxococcus xanthus (strain DK1622).